The chain runs to 396 residues: Elongation factor Tu 1 (396 aa).

One can recognise a tr-type G domain in the interval 10–206 (KPHVNIGTIG…AVDEYIPTPE (197 aa)). A G1 region spans residues 19 to 26 (GHVDHGKT). Residue 19-26 (GHVDHGKT) participates in GTP binding. Thr26 contacts Mg(2+). The tract at residues 60–64 (GITIN) is G2. Positions 81 to 84 (DCPG) are G3. GTP-binding positions include 81–85 (DCPGH) and 136–139 (NKVD). Positions 136–139 (NKVD) are G4. The tract at residues 174-176 (SAL) is G5.

It belongs to the TRAFAC class translation factor GTPase superfamily. Classic translation factor GTPase family. EF-Tu/EF-1A subfamily. In terms of assembly, monomer.

The protein resides in the cytoplasm. It catalyses the reaction GTP + H2O = GDP + phosphate + H(+). Functionally, GTP hydrolase that promotes the GTP-dependent binding of aminoacyl-tRNA to the A-site of ribosomes during protein biosynthesis. The protein is Elongation factor Tu 1 of Hyphomonas neptunium (strain ATCC 15444).